A 494-amino-acid polypeptide reads, in one-letter code: Cytochrome c-552 (494 aa).

Positions 1 to 31 (MEKKLKSWQGWLLFGGTMVVVFVLGMIAASV) are cleaved as a signal peptide. His-116 lines the heme c pocket. Cys-144, Cys-147, and Lys-148 together coordinate heme. Positions 182, 185, 186, 224, 227, and 228 each coordinate heme c. Positions 230, 231, 276, and 278 each coordinate Ca(2+). Position 231 (Tyr-231) interacts with substrate. Position 279 (His-279) interacts with substrate. His-290, Cys-297, Cys-300, His-301, His-315, Cys-328, Cys-331, His-332, and His-407 together coordinate heme c.

This sequence belongs to the cytochrome c-552 family. The cofactor is Ca(2+). Heme c is required as a cofactor.

Its subcellular location is the periplasm. The catalysed reaction is 6 Fe(III)-[cytochrome c] + NH4(+) + 2 H2O = 6 Fe(II)-[cytochrome c] + nitrite + 8 H(+). Its pathway is nitrogen metabolism; nitrate reduction (assimilation). Its function is as follows. Catalyzes the reduction of nitrite to ammonia, consuming six electrons in the process. This Parabacteroides distasonis (strain ATCC 8503 / DSM 20701 / CIP 104284 / JCM 5825 / NCTC 11152) protein is Cytochrome c-552.